The following is a 158-amino-acid chain: Small t antigen (158 aa).

Methionine 1 carries the N-acetylmethionine; by host modification. In terms of domain architecture, J spans 12-75 (RLMHLLKLPM…LPCLSTQDFI (64 aa)). The segment at 95–106 (CNFENCNKCLYC) adopts a C4-type; atypical zinc-finger fold. Residues 112–130 (HKSDPPFPKVWGYCLCYKC) form an H1C3-type; atypical zinc finger.

In terms of assembly, interacts with host PPP2R1A; the interaction inhibits PP2A activity.

It localises to the host cytoplasm. Its subcellular location is the host nucleus. Functionally, promotes efficient viral genome replication by accelerating both G1 and S phase progression of the cell cycle. Inhibits host PP2A by binding to the A subunit, thereby displacing lower affinity regulatory B subunit. Inactivation of PP2A in turn results in the transactivation of cyclin A and cyclin D1 promoters. Late during the infection cycle, ST may induce dephosphorylation of host MTOR, leading to the inhibition of cap-dependent translation. May establish and maintain high levels of viral genomes during persistent infection in cell culture. The sequence is that of Small t antigen from Mus musculus (Mouse).